The sequence spans 45 residues: Mu-conotoxin-like Cal 12.1.2a (45 aa).

Intrachain disulfides connect Cys-3–Cys-16, Cys-11–Cys-28, Cys-18–Cys-33, and Cys-27–Cys-39. Residue Pro-23 is modified to 4-hydroxyproline. Residues Trp-37 and Trp-38 each carry the 6'-bromotryptophan modification. At Pro-40 the chain carries 4-hydroxyproline. Trp-44 carries the 6'-bromotryptophan modification.

As to expression, expressed by the venom duct.

Its subcellular location is the secreted. Mu-conotoxins block voltage-gated sodium channels. This toxin reversibly blocks voltage-gated sodium channel in cephalopods, with no alteration in the voltage dependence of sodium conductance or on the kinetics of inactivation. The chain is Mu-conotoxin-like Cal 12.1.2a from Californiconus californicus (California cone).